The following is a 553-amino-acid chain: Formate--tetrahydrofolate ligase (553 aa).

65 to 72 (TPAGEGKS) provides a ligand contact to ATP.

It belongs to the formate--tetrahydrofolate ligase family.

It carries out the reaction (6S)-5,6,7,8-tetrahydrofolate + formate + ATP = (6R)-10-formyltetrahydrofolate + ADP + phosphate. Its pathway is one-carbon metabolism; tetrahydrofolate interconversion. In Brachyspira hyodysenteriae (strain ATCC 49526 / WA1), this protein is Formate--tetrahydrofolate ligase.